We begin with the raw amino-acid sequence, 417 residues long: NADH-quinone oxidoreductase subunit D (417 aa).

The protein belongs to the complex I 49 kDa subunit family. As to quaternary structure, NDH-1 is composed of 14 different subunits. Subunits NuoB, C, D, E, F, and G constitute the peripheral sector of the complex.

It is found in the cell inner membrane. It carries out the reaction a quinone + NADH + 5 H(+)(in) = a quinol + NAD(+) + 4 H(+)(out). In terms of biological role, NDH-1 shuttles electrons from NADH, via FMN and iron-sulfur (Fe-S) centers, to quinones in the respiratory chain. The immediate electron acceptor for the enzyme in this species is believed to be ubiquinone. Couples the redox reaction to proton translocation (for every two electrons transferred, four hydrogen ions are translocated across the cytoplasmic membrane), and thus conserves the redox energy in a proton gradient. The protein is NADH-quinone oxidoreductase subunit D of Polaromonas sp. (strain JS666 / ATCC BAA-500).